Here is a 246-residue protein sequence, read N- to C-terminus: ATP synthase subunit a, chloroplastic (246 aa).

The next 4 helical transmembrane spans lie at 35–55 (GQVF…ALVG), 94–114 (VPYI…GALI), 133–153 (INVT…AGLS), and 202–222 (VFAL…GLFA).

The protein belongs to the ATPase A chain family. In terms of assembly, F-type ATPases have 2 components, CF(1) - the catalytic core - and CF(0) - the membrane proton channel. CF(1) has five subunits: alpha(3), beta(3), gamma(1), delta(1), epsilon(1). CF(0) has four main subunits: a, b, b' and c.

Its subcellular location is the plastid. The protein resides in the chloroplast thylakoid membrane. In terms of biological role, key component of the proton channel; it plays a direct role in the translocation of protons across the membrane. In Rhodomonas salina (Cryptomonas salina), this protein is ATP synthase subunit a, chloroplastic.